Reading from the N-terminus, the 125-residue chain is Putative iron-sulfur cluster insertion protein ErpA 2 (125 aa).

Positions 53, 117, and 119 each coordinate iron-sulfur cluster.

The protein belongs to the HesB/IscA family. As to quaternary structure, homodimer. Iron-sulfur cluster serves as cofactor.

Functionally, required for insertion of 4Fe-4S clusters. The chain is Putative iron-sulfur cluster insertion protein ErpA 2 from Polaromonas naphthalenivorans (strain CJ2).